Here is a 545-residue protein sequence, read N- to C-terminus: Phenylalanine--tRNA ligase beta subunit (545 aa).

A B5 domain is found at 266-342; the sequence is LSPALRNINV…IGAGFGNLEA (77 aa). Mg(2+) contacts are provided by Asp-320, Asp-326, Glu-329, and Asp-330.

This sequence belongs to the phenylalanyl-tRNA synthetase beta subunit family. Type 2 subfamily. Tetramer of two alpha and two beta subunits. Mg(2+) is required as a cofactor.

Its subcellular location is the cytoplasm. The enzyme catalyses tRNA(Phe) + L-phenylalanine + ATP = L-phenylalanyl-tRNA(Phe) + AMP + diphosphate + H(+). This Methanospirillum hungatei JF-1 (strain ATCC 27890 / DSM 864 / NBRC 100397 / JF-1) protein is Phenylalanine--tRNA ligase beta subunit.